The following is a 485-amino-acid chain: Pre-glycoprotein polyprotein GP complex (485 aa).

Residue G2 is the site of N-myristoyl glycine; by host attachment. The Extracellular segment spans residues 2–17 (GQLISFFGEIPTILQE). Residues 18 to 33 (ALNIALIAVSIIATIK) traverse the membrane as a helical segment. At 34 to 58 (GVVNVWKSGLIQLLMFVMLAGRSCS) the chain is on the cytoplasmic side. C57 is a binding site for Zn(2+). The Extracellular segment spans residues 59–424 (VQIGHHLELE…QGRTPLSLVD (366 aa)). 4 disulfide bridges follow: C85/C225, C271/C284, C293/C302, and C356/C377. N88, N128, N179, and N218 each carry an N-linked (GlcNAc...) asparagine; by host glycan. N-linked (GlcNAc...) asparagine; by host glycans are attached at residues N357, N365, N382, and N387. Residues 425–445 (VCFWSTLFYTASIFLHLIRIP) traverse the membrane as a helical segment. Residues 446-485 (THRHIVGEGCPKPHRLRADSTCACGLYKQKRRPLKWVRSN) are Cytoplasmic-facing. Zn(2+) contacts are provided by H447, H449, C455, H459, C467, and C469.

Belongs to the arenaviridae GPC protein family. As to quaternary structure, interacts with glycoprotein G2. Part of the GP complex (GP-C) together with glycoprotein G1 and glycoprotein G2. The GP-complex interacts with protein Z, which interacts with ribonucleocapsid; these interactions may induce virion budding. In terms of assembly, homotrimer; disulfide-linked. In pre-fusion state, G1 homotrimers bind G2 homotrimers via ionic interactions. Part of the GP complex (GP-C) together with glycoprotein G2 and the stable signal peptide. The GP-complex interacts with protein Z, which interacts with ribonucleocapsid; these interactions may induce virion budding. Homotrimer. Interacts with the stable signal peptide. In pre-fusion state, G2 homotrimers bind G1 homotrimers via ionic interactions. Part of the GP complex (GP-C) together with glycoprotein G1 and the stable signal peptide. Acidification in the endosome triggers rearrangements, which ultimately leads to a 6 helix bundle formed by the two heptad repeat domains (HR1 and HR2) in post-fusion state. The GP-complex interacts with protein Z, which interacts with ribonucleocapsid; these interactions may induce virion budding. In terms of processing, specific enzymatic cleavages in vivo yield mature proteins. GP-C polyprotein is cleaved in the endoplasmic reticulum by the host protease MBTPS1. Only cleaved glycoprotein is incorporated into virions. Post-translationally, the SSP remains stably associated with the GP complex following cleavage by signal peptidase and plays crucial roles in the trafficking of GP through the secretory pathway. Myristoylation is necessary for GP2-mediated fusion activity.

The protein resides in the virion membrane. The protein localises to the host endoplasmic reticulum membrane. It is found in the host Golgi apparatus membrane. It localises to the host cell membrane. Its function is as follows. Functions as a cleaved signal peptide that is retained as the third component of the GP complex (GP-C). Helps to stabilize the spike complex in its native conformation. The SSP is required for efficient glycoprotein expression, post-translational maturation cleavage of G1 and G2, glycoprotein transport to the cell surface plasma membrane, formation of infectious virus particles, and acid pH-dependent glycoprotein-mediated cell fusion. Functionally, forms the virion spikes together with glycoprotein G2. The glycoprotein spike trimers are connected to the underlying matrix. Interacts with the host receptor leading to virus endocytosis. In terms of biological role, forms the virion spikes together with glycoprotein G1. The glycoprotein spike trimers are connected to the underlying matrix. Class I viral fusion protein that directs fusion of viral and host endosomal membranes, leading to delivery of the nucleocapsid into the cytoplasm. Membrane fusion is mediated by irreversible conformational changes induced by acidification. The chain is Pre-glycoprotein polyprotein GP complex from Sigmodon hispidus (Hispid cotton rat).